The chain runs to 131 residues: UPF0102 protein YraN (131 aa).

Residues 1 to 20 form a disordered region; sequence MATVPTRSGSPRQLTTKQTG.

The protein belongs to the UPF0102 family.

This chain is UPF0102 protein YraN, found in Escherichia coli O139:H28 (strain E24377A / ETEC).